The sequence spans 315 residues: Three-prime repair exonuclease 1 (315 aa).

Mg(2+)-binding residues include Asp-18 and Glu-20. 20–21 (EA) contacts substrate. Phosphoserine is present on Ser-78. Residue Tyr-129 participates in substrate binding. Phosphoserine is present on Ser-167. His-195 serves as the catalytic Proton donor/acceptor. Residue Asp-200 coordinates Mg(2+). Residue Asp-200 participates in substrate binding. The interval 236–315 (TTSTGTNPRP…YGLSLAMPGQ (80 aa)) is necessary for endoplasmic reticulum localization. The interval 243–315 (PRPSAVTATV…YGLSLAMPGQ (73 aa)) is interaction with UBQLN1. Residues 256–282 (RASDTGPNLRGDRSPKPAPSPKMCPGA) are disordered. Positions 271–282 (KPAPSPKMCPGA) are enriched in pro residues. Positions 282–315 (APPGEGLLAPLGLLAFLTLAVAMLYGLSLAMPGQ) are necessary for cytoplasmic retention.

The protein belongs to the exonuclease superfamily. TREX family. In terms of assembly, homodimer. Interacts (via proline-rich region) with TCERG1/CA150 (via the second WW domain). Component of the SET complex, composed of at least ANP32A, APEX1, HMGB2, NME1, SET and TREX1. Within this complex, directly interacts with SET; this interaction does not result in TREX1 inhibition. Also interacts with NME1, but only following translocation to the nucleus. Directly interacts with UBQLN1 (via ubiquitin-like domain); the interaction may control TREX1 subcellular location. The cofactor is Mg(2+). Ubiquitinated, but not targeted to proteasomal degradation. Ubiquitination may be important for interaction with UBQLN1.

It is found in the nucleus. The protein resides in the cytoplasm. The protein localises to the cytosol. Its subcellular location is the endoplasmic reticulum membrane. It catalyses the reaction Exonucleolytic cleavage in the 3'- to 5'-direction to yield nucleoside 5'-phosphates.. Major cellular 3'-to-5' DNA exonuclease which digests single-stranded DNA (ssDNA) and double-stranded DNA (dsDNA) with mismatched 3' termini. Prevents cell-intrinsic initiation of autoimmunity. Acts by metabolizing DNA fragments from endogenous retroelements, including L1, LTR and SINE elements. Plays a key role in degradation of DNA fragments at cytosolic micronuclei arising from genome instability: its association with the endoplasmic reticulum membrane directs TREX1 to ruptured micronuclei, leading to micronuclear DNA degradation. Micronuclear DNA degradation is required to limit CGAS activation and subsequent inflammation. Unless degraded, these DNA fragments accumulate in the cytosol and activate the cGAS-STING innate immune signaling, leading to the production of type I interferon. Prevents chronic ATM-dependent checkpoint activation, by processing ssDNA polynucleotide species arising from the processing of aberrant DNA replication intermediates. Inefficiently degrades oxidized DNA, such as that generated upon antimicrobial reactive oxygen production or upon absorption of UV light. During GZMA-mediated cell death, contributes to DNA damage in concert with NME1. NME1 nicks one strand of DNA and TREX1 removes bases from the free 3' end to enhance DNA damage and prevent DNA end reannealing and rapid repair. In Bos taurus (Bovine), this protein is Three-prime repair exonuclease 1.